The primary structure comprises 508 residues: Steroid 17-alpha-hydroxylase/17,20 lyase (508 aa).

Asn202 lines the substrate pocket. Residue Cys442 coordinates heme.

The protein belongs to the cytochrome P450 family. Heme is required as a cofactor.

The protein resides in the endoplasmic reticulum membrane. It is found in the microsome membrane. It carries out the reaction a C21-steroid + reduced [NADPH--hemoprotein reductase] + O2 = a 17alpha-hydroxy-C21-steroid + oxidized [NADPH--hemoprotein reductase] + H2O + H(+). It catalyses the reaction progesterone + reduced [NADPH--hemoprotein reductase] + O2 = 17alpha-hydroxyprogesterone + oxidized [NADPH--hemoprotein reductase] + H2O + H(+). The catalysed reaction is pregnenolone + reduced [NADPH--hemoprotein reductase] + O2 = 17alpha-hydroxypregnenolone + oxidized [NADPH--hemoprotein reductase] + H2O + H(+). The enzyme catalyses 17alpha-hydroxyprogesterone + reduced [NADPH--hemoprotein reductase] + O2 = androst-4-ene-3,17-dione + acetate + oxidized [NADPH--hemoprotein reductase] + H2O + 2 H(+). It carries out the reaction 17alpha-hydroxyprogesterone + reduced [NADPH--hemoprotein reductase] + O2 = 16alpha,17alpha-dihydroxyprogesterone + oxidized [NADPH--hemoprotein reductase] + H2O + H(+). It catalyses the reaction 16alpha,17alpha-dihydroxyprogesterone + reduced [NADPH--hemoprotein reductase] + O2 = 6beta,16alpha,17alpha-trihydroxyprogesterone + oxidized [NADPH--hemoprotein reductase] + H2O + H(+). The catalysed reaction is 17alpha-hydroxypregnenolone + reduced [NADPH--hemoprotein reductase] + O2 = 3beta-hydroxyandrost-5-en-17-one + acetate + oxidized [NADPH--hemoprotein reductase] + H2O + 2 H(+). The enzyme catalyses 16alpha,17alpha-dihydroxypregnenolone + reduced [NADPH--hemoprotein reductase] + O2 = 3beta,16alpha-dihydroxy-androst-5-en-17-one + acetate + oxidized [NADPH--hemoprotein reductase] + H2O + 2 H(+). It carries out the reaction 3beta-hydroxyandrost-5-en-17-one + reduced [NADPH--hemoprotein reductase] + O2 = 3beta,16alpha-dihydroxy-androst-5-en-17-one + oxidized [NADPH--hemoprotein reductase] + H2O + H(+). It catalyses the reaction androst-4-ene-3,17-dione + reduced [NADPH--hemoprotein reductase] + O2 = 16alpha-hydroxyandrost-4-ene-3,17-dione + oxidized [NADPH--hemoprotein reductase] + H2O + H(+). It functions in the pathway steroid hormone biosynthesis. It participates in steroid biosynthesis; glucocorticoid biosynthesis. Its activity is regulated as follows. Regulated predominantly by intracellular cAMP levels. The 17,20-lyase activity is stimulated by cytochrome b5, which acts as an allosteric effector increasing the Vmax of the lyase activity. Its function is as follows. A cytochrome P450 monooxygenase involved in corticoid and androgen biosynthesis. Catalyzes 17-alpha hydroxylation of C21 steroids, which is common for both pathways. A second oxidative step, required only for androgen synthesis, involves an acyl-carbon cleavage. The 17-alpha hydroxy intermediates, as part of adrenal glucocorticoids biosynthesis pathway, are precursors of cortisol. Hydroxylates steroid hormones, pregnenolone and progesterone to form 17-alpha hydroxy metabolites, followed by the cleavage of the C17-C20 bond to form C19 steroids, dehydroepiandrosterone (DHEA) and androstenedione. Has 16-alpha hydroxylase activity. Catalyzes 16-alpha hydroxylation of 17-alpha hydroxy pregnenolone, followed by the cleavage of the C17-C20 bond to form 16-alpha-hydroxy DHEA. Also 16-alpha hydroxylates androgens, relevant for estriol synthesis. Mechanistically, uses molecular oxygen inserting one oxygen atom into a substrate, and reducing the second into a water molecule, with two electrons provided by NADPH via cytochrome P450 reductase (CPR; NADPH-ferrihemoprotein reductase). In Papio cynocephalus (Yellow baboon), this protein is Steroid 17-alpha-hydroxylase/17,20 lyase (CYP17A1).